A 156-amino-acid chain; its full sequence is NAD(P)H-quinone oxidoreductase subunit N (156 aa).

Belongs to the complex I NdhN subunit family. In terms of assembly, NDH-1 can be composed of about 15 different subunits; different subcomplexes with different compositions have been identified which probably have different functions.

Its subcellular location is the cellular thylakoid membrane. The enzyme catalyses a plastoquinone + NADH + (n+1) H(+)(in) = a plastoquinol + NAD(+) + n H(+)(out). It catalyses the reaction a plastoquinone + NADPH + (n+1) H(+)(in) = a plastoquinol + NADP(+) + n H(+)(out). NDH-1 shuttles electrons from an unknown electron donor, via FMN and iron-sulfur (Fe-S) centers, to quinones in the respiratory and/or the photosynthetic chain. The immediate electron acceptor for the enzyme in this species is believed to be plastoquinone. Couples the redox reaction to proton translocation, and thus conserves the redox energy in a proton gradient. Cyanobacterial NDH-1 also plays a role in inorganic carbon-concentration. This is NAD(P)H-quinone oxidoreductase subunit N from Prochlorococcus marinus subsp. pastoris (strain CCMP1986 / NIES-2087 / MED4).